Consider the following 274-residue polypeptide: Large ribosomal subunit protein bL28m (274 aa).

The tract at residues 249–274 (SETEEFGLGQEEDLFMKEEPKPTKMA) is disordered. Residues 262-274 (LFMKEEPKPTKMA) show a composition bias toward basic and acidic residues.

This sequence belongs to the bacterial ribosomal protein bL28 family. As to quaternary structure, component of the mitochondrial large ribosomal subunit (mt-LSU). Mature N.crassa 74S mitochondrial ribosomes consist of a small (37S) and a large (54S) subunit. The 37S small subunit contains a 16S ribosomal RNA (16S mt-rRNA) and 32 different proteins. The 54S large subunit contains a 23S rRNA (23S mt-rRNA) and 42 different proteins.

The protein localises to the mitochondrion. Functionally, component of the mitochondrial ribosome (mitoribosome), a dedicated translation machinery responsible for the synthesis of mitochondrial genome-encoded proteins, including at least some of the essential transmembrane subunits of the mitochondrial respiratory chain. The mitoribosomes are attached to the mitochondrial inner membrane and translation products are cotranslationally integrated into the membrane. The protein is Large ribosomal subunit protein bL28m (mrpl24) of Neurospora crassa (strain ATCC 24698 / 74-OR23-1A / CBS 708.71 / DSM 1257 / FGSC 987).